Consider the following 286-residue polypeptide: Formamidopyrimidine-DNA glycosylase (286 aa).

Catalysis depends on proline 2, which acts as the Schiff-base intermediate with DNA. Catalysis depends on glutamate 3, which acts as the Proton donor. The active-site Proton donor; for beta-elimination activity is lysine 61. DNA is bound by residues histidine 103, arginine 122, and arginine 164. The FPG-type zinc finger occupies 250-284 (NAYGQTGEPCGRCGTQIVRENFMNRGSHYCPNCQK). The active-site Proton donor; for delta-elimination activity is arginine 274.

Belongs to the FPG family. Monomer. The cofactor is Zn(2+).

It carries out the reaction Hydrolysis of DNA containing ring-opened 7-methylguanine residues, releasing 2,6-diamino-4-hydroxy-5-(N-methyl)formamidopyrimidine.. The catalysed reaction is 2'-deoxyribonucleotide-(2'-deoxyribose 5'-phosphate)-2'-deoxyribonucleotide-DNA = a 3'-end 2'-deoxyribonucleotide-(2,3-dehydro-2,3-deoxyribose 5'-phosphate)-DNA + a 5'-end 5'-phospho-2'-deoxyribonucleoside-DNA + H(+). In terms of biological role, involved in base excision repair of DNA damaged by oxidation or by mutagenic agents. Acts as a DNA glycosylase that recognizes and removes damaged bases. Has a preference for oxidized purines, such as 7,8-dihydro-8-oxoguanine (8-oxoG). Has AP (apurinic/apyrimidinic) lyase activity and introduces nicks in the DNA strand. Cleaves the DNA backbone by beta-delta elimination to generate a single-strand break at the site of the removed base with both 3'- and 5'-phosphates. The protein is Formamidopyrimidine-DNA glycosylase of Corynebacterium glutamicum (strain R).